We begin with the raw amino-acid sequence, 699 residues long: Auxin response factor 10 (699 aa).

3 disordered regions span residues 108 to 136 (AAEARREEENSRPRPTSFAKTLTQSDANN), 505 to 533 (TDLTIGSPGKPDDAACSPSSGGKKIDDTK), and 551 to 595 (KNGN…SWSL). Residues 110–119 (EARREEENSR) show a composition bias toward basic and acidic residues. The span at 125-135 (FAKTLTQSDAN) shows a compositional bias: polar residues. Residues 125 to 227 (FAKTLTQSDA…NIHVGLRRAK (103 aa)) constitute a DNA-binding region (TF-B3). Polar residues predominate over residues 570–593 (PNTSEGSDSGVTQGSPTKNTTPSW). A PB1 domain is found at 613 to 693 (PGQCKVFVES…RKLRILTDAG (81 aa)).

This sequence belongs to the ARF family. As to quaternary structure, homodimers and heterodimers.

It localises to the nucleus. In terms of biological role, auxin response factors (ARFs) are transcriptional factors that bind specifically to the DNA sequence 5'-TGTCTC-3' found in the auxin-responsive promoter elements (AuxREs). In Oryza sativa subsp. indica (Rice), this protein is Auxin response factor 10 (ARF10).